The primary structure comprises 384 residues: Tryptophan--tRNA ligase (384 aa).

Residues 81 to 89 carry the 'HIGH' region motif; the sequence is PSGPMHIGH. The 'KMSKS' region motif lies at 252–256; it reads KMSAS.

The protein belongs to the class-I aminoacyl-tRNA synthetase family.

It localises to the cytoplasm. It carries out the reaction tRNA(Trp) + L-tryptophan + ATP = L-tryptophyl-tRNA(Trp) + AMP + diphosphate + H(+). This chain is Tryptophan--tRNA ligase, found in Thermococcus kodakarensis (strain ATCC BAA-918 / JCM 12380 / KOD1) (Pyrococcus kodakaraensis (strain KOD1)).